A 700-amino-acid chain; its full sequence is Elongation factor G (700 aa).

Positions 8–290 (ERYRNIGISA…AVIDYLPSPV (283 aa)) constitute a tr-type G domain. Residues 17 to 24 (AHIDAGKT), 88 to 92 (DTPGH), and 142 to 145 (NKMD) contribute to the GTP site.

It belongs to the TRAFAC class translation factor GTPase superfamily. Classic translation factor GTPase family. EF-G/EF-2 subfamily.

It localises to the cytoplasm. In terms of biological role, catalyzes the GTP-dependent ribosomal translocation step during translation elongation. During this step, the ribosome changes from the pre-translocational (PRE) to the post-translocational (POST) state as the newly formed A-site-bound peptidyl-tRNA and P-site-bound deacylated tRNA move to the P and E sites, respectively. Catalyzes the coordinated movement of the two tRNA molecules, the mRNA and conformational changes in the ribosome. The polypeptide is Elongation factor G (Paracidovorax citrulli (strain AAC00-1) (Acidovorax citrulli)).